Consider the following 61-residue polypeptide: Toxin S5C1 (61 aa).

Intrachain disulfides connect C3–C22, C16–C39, C41–C53, and C54–C59. The Cell attachment site signature appears at 45–47; it reads RGD.

This sequence belongs to the three-finger toxin family. Short-chain subfamily. Antiplatelet toxin sub-subfamily. As to expression, expressed by the venom gland.

Its subcellular location is the secreted. Inhibits ADP-induced platelet aggregation and inhibits the binding of purified platelet fibrinogen receptor alpha-IIb/beta-3 (ITGA2B/ITGB3) to immobilized fibrinogen. The sequence is that of Toxin S5C1 from Dendroaspis jamesoni kaimosae (Eastern Jameson's mamba).